The sequence spans 1388 residues: Kinesin-like protein KIF15 (1388 aa).

The interval 1 to 25 (MAPGCKTELRSVTNGQSNQPSNEGD) is disordered. Positions 10-22 (RSVTNGQSNQPSN) are enriched in polar residues. A Kinesin motor domain is found at 26–363 (AIKVFVRIRP…LNFAQRAKLI (338 aa)). ATP is bound at residue 109 to 116 (GQTGSGKT). Positions 368–1388 (VVNEDTQGNV…FLKEKKRSES (1021 aa)) form a coiled coil. Thr399 is modified (phosphothreonine). Phosphoserine is present on Ser568. Lys1009 is modified (N6-acetyllysine). Ser1141 and Ser1169 each carry phosphoserine. The tract at residues 1228–1250 (QKENSDQNHPDNQQLKNEQEESI) is disordered.

The protein belongs to the TRAFAC class myosin-kinesin ATPase superfamily. Kinesin family. KLP2 subfamily. As to quaternary structure, interacts with MKI67 and TPX2. In terms of tissue distribution, expressed in testis, colon, thymus and in breast cancer.

The protein localises to the cytoplasm. The protein resides in the cytoskeleton. It is found in the spindle. Plus-end directed kinesin-like motor enzyme involved in mitotic spindle assembly. The sequence is that of Kinesin-like protein KIF15 (KIF15) from Homo sapiens (Human).